The following is a 230-amino-acid chain: MDSLYDISCFAAGLAGNIFALALFLSPVTTFKRILKAKSTERFDGLPYLFSLLNCLICLWYGLPWVADGRLLVATVNGIGAVFQLAYICLFIFYADSRKTRMKIIGLLVLVVCGFALVSHASVFFFDQPLRQQFVGAVSMASLISMFASPLAVMGVVIRSESVEFMPFYLSLSTFLMSASFALYGLLLRDFFIYFPNGLGLILGAMQLALYAYYSRKWRGQDSSAPLLLA.

At 1-6 the chain is on the extracellular side; sequence MDSLYD. A helical transmembrane segment spans residues 7-27; the sequence is ISCFAAGLAGNIFALALFLSP. The MtN3/slv 1 domain maps to 13 to 98; the sequence is GLAGNIFALA…CLFIFYADSR (86 aa). Residues 28-45 are Cytoplasmic-facing; sequence VTTFKRILKAKSTERFDG. A helical membrane pass occupies residues 46-66; sequence LPYLFSLLNCLICLWYGLPWV. The Extracellular portion of the chain corresponds to 67–72; the sequence is ADGRLL. Residues 73–93 traverse the membrane as a helical segment; it reads VATVNGIGAVFQLAYICLFIF. The Cytoplasmic segment spans residues 94–103; the sequence is YADSRKTRMK. The chain crosses the membrane as a helical span at residues 104–124; that stretch reads IIGLLVLVVCGFALVSHASVF. Residues 125–137 lie on the Extracellular side of the membrane; that stretch reads FFDQPLRQQFVGA. The 85-residue stretch at 133 to 217 folds into the MtN3/slv 2 domain; the sequence is QFVGAVSMAS…LALYAYYSRK (85 aa). The helical transmembrane segment at 138–158 threads the bilayer; sequence VSMASLISMFASPLAVMGVVI. Residues 159 to 167 lie on the Cytoplasmic side of the membrane; the sequence is RSESVEFMP. A helical transmembrane segment spans residues 168–188; the sequence is FYLSLSTFLMSASFALYGLLL. Residues 189 to 190 lie on the Extracellular side of the membrane; it reads RD. A helical membrane pass occupies residues 191–211; the sequence is FFIYFPNGLGLILGAMQLALY. Over 212–230 the chain is Cytoplasmic; it reads AYYSRKWRGQDSSAPLLLA.

Belongs to the SWEET sugar transporter family. As to quaternary structure, forms homooligomers and/or heterooligomers.

The protein localises to the cell membrane. Mediates both low-affinity uptake and efflux of sugar across the plasma membrane. In Oryza sativa subsp. indica (Rice), this protein is Bidirectional sugar transporter SWEET2b (SWEET2B).